The chain runs to 376 residues: Chaperone protein DnaJ (376 aa).

Residues 4–68 enclose the J domain; it reads DYYQLLGVAR…ETRARYDQFG (65 aa). Residues 135–217 form a CR-type zinc finger; sequence GGEKEIRVTH…CGGAGRLRRP (83 aa). Zn(2+) contacts are provided by Cys148, Cys151, Cys165, Cys168, Cys191, Cys194, Cys205, and Cys208. CXXCXGXG motif repeat units lie at residues 148 to 155, 165 to 172, 191 to 198, and 205 to 212; these read CGTCQGSG, CTTCGGAG, CPTCEGSG, and CDDCGGAG.

The protein belongs to the DnaJ family. As to quaternary structure, homodimer. Zn(2+) serves as cofactor.

The protein resides in the cytoplasm. Functionally, participates actively in the response to hyperosmotic and heat shock by preventing the aggregation of stress-denatured proteins and by disaggregating proteins, also in an autonomous, DnaK-independent fashion. Unfolded proteins bind initially to DnaJ; upon interaction with the DnaJ-bound protein, DnaK hydrolyzes its bound ATP, resulting in the formation of a stable complex. GrpE releases ADP from DnaK; ATP binding to DnaK triggers the release of the substrate protein, thus completing the reaction cycle. Several rounds of ATP-dependent interactions between DnaJ, DnaK and GrpE are required for fully efficient folding. Also involved, together with DnaK and GrpE, in the DNA replication of plasmids through activation of initiation proteins. This Synechococcus sp. (strain ATCC 27144 / PCC 6301 / SAUG 1402/1) (Anacystis nidulans) protein is Chaperone protein DnaJ.